The chain runs to 424 residues: Serine--tRNA ligase (424 aa).

L-serine is bound at residue 233–235; that stretch reads TAE. An ATP-binding site is contributed by 264 to 266; sequence RRE. Residue Glu287 participates in L-serine binding. 351-354 serves as a coordination point for ATP; sequence EISS. Ser386 contacts L-serine.

The protein belongs to the class-II aminoacyl-tRNA synthetase family. Type-1 seryl-tRNA synthetase subfamily. In terms of assembly, homodimer. The tRNA molecule binds across the dimer.

It localises to the cytoplasm. The catalysed reaction is tRNA(Ser) + L-serine + ATP = L-seryl-tRNA(Ser) + AMP + diphosphate + H(+). The enzyme catalyses tRNA(Sec) + L-serine + ATP = L-seryl-tRNA(Sec) + AMP + diphosphate + H(+). It functions in the pathway aminoacyl-tRNA biosynthesis; selenocysteinyl-tRNA(Sec) biosynthesis; L-seryl-tRNA(Sec) from L-serine and tRNA(Sec): step 1/1. Functionally, catalyzes the attachment of serine to tRNA(Ser). Is also able to aminoacylate tRNA(Sec) with serine, to form the misacylated tRNA L-seryl-tRNA(Sec), which will be further converted into selenocysteinyl-tRNA(Sec). In Pseudothermotoga lettingae (strain ATCC BAA-301 / DSM 14385 / NBRC 107922 / TMO) (Thermotoga lettingae), this protein is Serine--tRNA ligase.